A 337-amino-acid chain; its full sequence is Mitochondrial uncoupling protein 6 (337 aa).

Solcar repeat units follow at residues 4–136 (KPFL…LKRR), 145–236 (FPLV…VKEI), and 246–331 (GGIG…VRGL). A run of 6 helical transmembrane segments spans residues 6 to 26 (FLEG…LDLI), 105 to 125 (PAAL…YSAT), 151 to 171 (ITAG…ADVA), 210 to 230 (RGSW…LATY), 252 to 272 (VAAS…IDVV), and 304 to 324 (YKGL…LFLT).

It belongs to the mitochondrial carrier (TC 2.A.29) family.

The protein localises to the mitochondrion inner membrane. Functionally, PUMPS are mitochondrial transporter proteins that create proton leaks across the inner mitochondrial membrane, thus uncoupling oxidative phosphorylation. This leads to a decrease in the efficiency of oxidative phosphorylation and an increase in heat production. May be involved in protecting plant cells against oxidative stress damage. Recombinant PUMP6, reconstituted into liposomes, transports a wide range of dicarboxylic acids including malate, oxaloacetate and succinate as well as phosphate, sulfate and thiosulfate. However, it is unknown if these transports are of any biological significance in vivo. This Arabidopsis thaliana (Mouse-ear cress) protein is Mitochondrial uncoupling protein 6 (PUMP6).